We begin with the raw amino-acid sequence, 396 residues long: Imidazolonepropionase (396 aa).

The Fe(3+) site is built by histidine 70 and histidine 72. 2 residues coordinate Zn(2+): histidine 70 and histidine 72. Residues arginine 79, tyrosine 137, and histidine 164 each contribute to the 4-imidazolone-5-propanoate site. Residue tyrosine 137 coordinates N-formimidoyl-L-glutamate. Position 227 (histidine 227) interacts with Fe(3+). Histidine 227 provides a ligand contact to Zn(2+). Glutamine 230 contributes to the 4-imidazolone-5-propanoate binding site. Fe(3+) is bound at residue aspartate 301. Aspartate 301 contacts Zn(2+). N-formimidoyl-L-glutamate contacts are provided by asparagine 303 and glycine 305. Residue serine 306 coordinates 4-imidazolone-5-propanoate.

This sequence belongs to the metallo-dependent hydrolases superfamily. HutI family. Zn(2+) serves as cofactor. Fe(3+) is required as a cofactor.

It localises to the cytoplasm. The enzyme catalyses 4-imidazolone-5-propanoate + H2O = N-formimidoyl-L-glutamate. The protein operates within amino-acid degradation; L-histidine degradation into L-glutamate; N-formimidoyl-L-glutamate from L-histidine: step 3/3. Functionally, catalyzes the hydrolytic cleavage of the carbon-nitrogen bond in imidazolone-5-propanoate to yield N-formimidoyl-L-glutamate. It is the third step in the universal histidine degradation pathway. The polypeptide is Imidazolonepropionase (Mycolicibacterium smegmatis (strain ATCC 700084 / mc(2)155) (Mycobacterium smegmatis)).